A 210-amino-acid polypeptide reads, in one-letter code: Small ribosomal subunit protein uS3 (210 aa).

A KH type-2 domain is found at 38 to 106; it reads LKSFLKKRLY…EVYLNIQEVR (69 aa).

This sequence belongs to the universal ribosomal protein uS3 family. In terms of assembly, part of the 30S ribosomal subunit. Forms a tight complex with proteins S10 and S14.

In terms of biological role, binds the lower part of the 30S subunit head. Binds mRNA in the 70S ribosome, positioning it for translation. The chain is Small ribosomal subunit protein uS3 from Geotalea daltonii (strain DSM 22248 / JCM 15807 / FRC-32) (Geobacter daltonii).